We begin with the raw amino-acid sequence, 168 residues long: Chemoreceptor glutamine deamidase CheD (168 aa).

Belongs to the CheD family. Forms a complex with CheC.

It catalyses the reaction L-glutaminyl-[protein] + H2O = L-glutamyl-[protein] + NH4(+). Deamidates glutamine residues to glutamate on methyl-accepting chemotaxis receptors (MCPs). CheD-mediated MCP deamidation is required for productive communication of the conformational signals of the chemoreceptors to the CheA kinase. The protein is Chemoreceptor glutamine deamidase CheD of Bacillus licheniformis (strain ATCC 14580 / DSM 13 / JCM 2505 / CCUG 7422 / NBRC 12200 / NCIMB 9375 / NCTC 10341 / NRRL NRS-1264 / Gibson 46).